The primary structure comprises 114 residues: Hemerythrin subunit 1 (114 aa).

Fe cation contacts are provided by His26, His55, Glu59, His74, His78, His102, and Asp107.

The protein belongs to the hemerythrin family.

Hemerythrin is a respiratory protein in blood cells of certain marine worms. The oxygen-binding site in each chain contains two iron atoms. This Golfingia vulgaris (Marine worm) protein is Hemerythrin subunit 1.